The primary structure comprises 274 residues: tRNA-cytidine(32) 2-sulfurtransferase (274 aa).

Residues 40–45 carry the PP-loop motif motif; the sequence is SGGKDS. [4Fe-4S] cluster contacts are provided by Cys115, Cys118, and Cys206.

It belongs to the TtcA family. As to quaternary structure, homodimer. It depends on Mg(2+) as a cofactor. The cofactor is [4Fe-4S] cluster.

It localises to the cytoplasm. The catalysed reaction is cytidine(32) in tRNA + S-sulfanyl-L-cysteinyl-[cysteine desulfurase] + AH2 + ATP = 2-thiocytidine(32) in tRNA + L-cysteinyl-[cysteine desulfurase] + A + AMP + diphosphate + H(+). Its pathway is tRNA modification. In terms of biological role, catalyzes the ATP-dependent 2-thiolation of cytidine in position 32 of tRNA, to form 2-thiocytidine (s(2)C32). The sulfur atoms are provided by the cysteine/cysteine desulfurase (IscS) system. This Pseudomonas fluorescens (strain Pf0-1) protein is tRNA-cytidine(32) 2-sulfurtransferase.